A 240-amino-acid chain; its full sequence is Probable transcriptional regulatory protein HPG27_148 (240 aa).

This sequence belongs to the TACO1 family.

It localises to the cytoplasm. The protein is Probable transcriptional regulatory protein HPG27_148 of Helicobacter pylori (strain G27).